The sequence spans 225 residues: UPF0758 protein Sama_0327 (225 aa).

The region spanning 102–224 is the MPN domain; that stretch reads VLTSPDLTRD…IVSFAERGWI (123 aa). Zn(2+)-binding residues include His173, His175, and Asp186. The short motif at 173–186 is the JAMM motif element; the sequence is HNHPSGVAEPSQAD.

Belongs to the UPF0758 family.

This Shewanella amazonensis (strain ATCC BAA-1098 / SB2B) protein is UPF0758 protein Sama_0327.